The following is a 633-amino-acid chain: Alpha-amylase (633 aa).

Glu-123 functions as the Nucleophile in the catalytic mechanism. The active-site Proton donor is the Asp-214.

Belongs to the glycosyl hydrolase 57 family.

It catalyses the reaction Endohydrolysis of (1-&gt;4)-alpha-D-glucosidic linkages in polysaccharides containing three or more (1-&gt;4)-alpha-linked D-glucose units.. The chain is Alpha-amylase (amyA) from Pyrococcus horikoshii (strain ATCC 700860 / DSM 12428 / JCM 9974 / NBRC 100139 / OT-3).